The sequence spans 184 residues: ATP synthase subunit b, chloroplastic (184 aa).

Residues 27-49 traverse the membrane as a helical segment; it reads LATNPINLSVVLGVLIFFGKGVL.

This sequence belongs to the ATPase B chain family. As to quaternary structure, F-type ATPases have 2 components, F(1) - the catalytic core - and F(0) - the membrane proton channel. F(1) has five subunits: alpha(3), beta(3), gamma(1), delta(1), epsilon(1). F(0) has four main subunits: a(1), b(1), b'(1) and c(10-14). The alpha and beta chains form an alternating ring which encloses part of the gamma chain. F(1) is attached to F(0) by a central stalk formed by the gamma and epsilon chains, while a peripheral stalk is formed by the delta, b and b' chains.

It localises to the plastid. The protein localises to the chloroplast thylakoid membrane. F(1)F(0) ATP synthase produces ATP from ADP in the presence of a proton or sodium gradient. F-type ATPases consist of two structural domains, F(1) containing the extramembraneous catalytic core and F(0) containing the membrane proton channel, linked together by a central stalk and a peripheral stalk. During catalysis, ATP synthesis in the catalytic domain of F(1) is coupled via a rotary mechanism of the central stalk subunits to proton translocation. Its function is as follows. Component of the F(0) channel, it forms part of the peripheral stalk, linking F(1) to F(0). The sequence is that of ATP synthase subunit b, chloroplastic from Ceratophyllum demersum (Rigid hornwort).